We begin with the raw amino-acid sequence, 162 residues long: RxLR effector protein PITG_06094 (162 aa).

A signal peptide spans 1–20 (MRLSFILAATLTGLLACATA). Residues 51–91 (RFLRAYNDAEDDSEDPKNVKNTVDAKPADESEDSELSEEER) carry the RxLR-dEER motif. Positions 56 to 88 (YNDAEDDSEDPKNVKNTVDAKPADESEDSELSE) are disordered.

This sequence belongs to the RxLR effector family.

It localises to the secreted. It is found in the host cytoplasm. The protein resides in the host nucleus. Its subcellular location is the host nucleolus. In terms of biological role, effector that enhances P.infestans colonization of Nicotiana benthamiana leaves. The sequence is that of RxLR effector protein PITG_06094 from Phytophthora infestans (strain T30-4) (Potato late blight agent).